The primary structure comprises 140 residues: Nucleoside diphosphate kinase (140 aa).

ATP-binding residues include Lys-11, Phe-59, Arg-87, Thr-93, Arg-104, and Asn-114. The active-site Pros-phosphohistidine intermediate is His-117.

Belongs to the NDK family. As to quaternary structure, homotetramer. Mg(2+) is required as a cofactor.

Its subcellular location is the cytoplasm. The catalysed reaction is a 2'-deoxyribonucleoside 5'-diphosphate + ATP = a 2'-deoxyribonucleoside 5'-triphosphate + ADP. The enzyme catalyses a ribonucleoside 5'-diphosphate + ATP = a ribonucleoside 5'-triphosphate + ADP. Functionally, major role in the synthesis of nucleoside triphosphates other than ATP. The ATP gamma phosphate is transferred to the NDP beta phosphate via a ping-pong mechanism, using a phosphorylated active-site intermediate. This is Nucleoside diphosphate kinase from Brucella anthropi (strain ATCC 49188 / DSM 6882 / CCUG 24695 / JCM 21032 / LMG 3331 / NBRC 15819 / NCTC 12168 / Alc 37) (Ochrobactrum anthropi).